Here is a 381-residue protein sequence, read N- to C-terminus: Putative steryl acetyl hydrolase mug81 (381 aa).

Residues 1–9 (MISLSLLYR) lie on the Cytoplasmic side of the membrane. Residues 10–30 (ILTLPIILVGTTILYFTIGTN) traverse the membrane as a helical; Signal-anchor for type II membrane protein segment. Residues 31–381 (FPHDELRHNL…YTFLRETFEE (351 aa)) are Lumenal-facing. An Involved in the stabilization of the negatively charged intermediate by the formation of the oxyanion hole motif is present at residues 125–127 (HGG). N-linked (GlcNAc...) asparagine glycosylation occurs at asparagine 193. Residue serine 200 is part of the active site.

This sequence belongs to the 'GDXG' lipolytic enzyme family.

The protein localises to the cytoplasm. It is found in the endoplasmic reticulum membrane. Required for the deacetylation of acetylated sterols. Has a role in meiosis. This chain is Putative steryl acetyl hydrolase mug81 (mug180), found in Schizosaccharomyces pombe (strain 972 / ATCC 24843) (Fission yeast).